A 147-amino-acid polypeptide reads, in one-letter code: Hemoglobin subunit beta-1 (147 aa).

The Globin domain occupies 3-147 (EWTAAERRHV…VVSALGRQYH (145 aa)). Heme b is bound by residues His-64 and His-93.

It belongs to the globin family. Hb 1 is a heterotetramer of two alpha-1 and two beta-1 chains. In terms of tissue distribution, red blood cells.

Functionally, involved in oxygen transport from gills to the various peripheral tissues. This chain is Hemoglobin subunit beta-1 (hbb1), found in Gadus morhua (Atlantic cod).